Consider the following 202-residue polypeptide: Putative pituitary tumor-transforming gene 3 protein (202 aa).

A D-box motif is present at residues 61–64 (RKAL). Positions 67-92 (VNRATEKSVKTNGPLKQKQPSFSAKK) are disordered. An SH3-binding motif is present at residues 163 to 173 (PPLPLKMPSPP).

This sequence belongs to the securin family.

Its subcellular location is the cytoplasm. The protein localises to the nucleus. This is Putative pituitary tumor-transforming gene 3 protein (PTTG3) from Pongo pygmaeus (Bornean orangutan).